The chain runs to 311 residues: Terpentetriene synthase (311 aa).

The DDXXD motif motif lies at 77–81; sequence DDRWD.

The protein belongs to the terpene synthase family. As to quaternary structure, homodimer. Mg(2+) is required as a cofactor.

It carries out the reaction terpentedienyl diphosphate = terpentetriene + diphosphate. It participates in antibiotic biosynthesis. Involved in the production of the isoprenoid antibiotic terpentecin. Converts terpentedienol diphosphate (TDP) into terpentetriene (TTE). Can also accept geranylgeranyl diphosphate (GGDP) and farnesyl diphosphate (FDP) as substrates. The protein is Terpentetriene synthase (cyc2) of Kitasatospora griseola (Streptomyces griseolosporeus).